Reading from the N-terminus, the 356-residue chain is UDP-N-acetylglucosamine--N-acetylmuramyl-(pentapeptide) pyrophosphoryl-undecaprenol N-acetylglucosamine transferase (356 aa).

The UDP-N-acetyl-alpha-D-glucosamine site is built by R166, S196, and Q290.

Belongs to the glycosyltransferase 28 family. MurG subfamily.

It localises to the cell membrane. It carries out the reaction Mur2Ac(oyl-L-Ala-gamma-D-Glu-L-Lys-D-Ala-D-Ala)-di-trans,octa-cis-undecaprenyl diphosphate + UDP-N-acetyl-alpha-D-glucosamine = beta-D-GlcNAc-(1-&gt;4)-Mur2Ac(oyl-L-Ala-gamma-D-Glu-L-Lys-D-Ala-D-Ala)-di-trans,octa-cis-undecaprenyl diphosphate + UDP + H(+). Its pathway is cell wall biogenesis; peptidoglycan biosynthesis. Its function is as follows. Cell wall formation. Catalyzes the transfer of a GlcNAc subunit on undecaprenyl-pyrophosphoryl-MurNAc-pentapeptide (lipid intermediate I) to form undecaprenyl-pyrophosphoryl-MurNAc-(pentapeptide)GlcNAc (lipid intermediate II). This chain is UDP-N-acetylglucosamine--N-acetylmuramyl-(pentapeptide) pyrophosphoryl-undecaprenol N-acetylglucosamine transferase, found in Staphylococcus aureus (strain Mu3 / ATCC 700698).